Reading from the N-terminus, the 1009-residue chain is Putative receptor-like protein 8 (1009 aa).

The N-terminal stretch at 1 to 22 (MKTNFVILLLLLCVFAISPSQQ) is a signal peptide. The Extracellular portion of the chain corresponds to 23–961 (EEINQHNPGI…EEDDEAPVDM (939 aa)). N-linked (GlcNAc...) asparagine glycosylation is found at Asn159 and Asn197. One copy of the LRR 1; degenerate repeat lies at 204-231 (FEEVRSLELSAGLNGFVDNVEGYKSLRK). LRR repeat units lie at residues 232-255 (LKNL…PFIN), 257-281 (ATSL…EIKD), 282-305 (LTNL…LTHL), 306-329 (KKLK…VVCE), 331-354 (KNLW…LGRL), 355-377 (NKLR…TFNR), 379-402 (ESLE…PLAN), 404-427 (TKLK…SEPK), 442-465 (LEKI…ATIV), 466-490 (HELQ…GYAL), 492-514 (NLLR…MGEM), 515-538 (VNIT…FVTG), 540-565 (FSLK…SFTS), 567-587 (EELR…LLSS), 588-612 (NTTL…MSNL), 613-636 (SGLT…LLAI), 638-660 (FLSL…VGGE), 662-681 (GIKL…DTLL), 682-705 (EKVQ…VNTE), 707-728 (IYIL…LCDL), 729-752 (RNIR…LYNL), 819-842 (LDYM…ELGS), 843-866 (LSKL…SFSN), 867-891 (LKDI…LTNL), and 893-916 (SLVV…QFNT). The N-linked (GlcNAc...) asparagine glycan is linked to Asn267. N-linked (GlcNAc...) asparagine glycans are attached at residues Asn390 and Asn402. 4 N-linked (GlcNAc...) asparagine glycosylation sites follow: Asn497, Asn516, Asn526, and Asn551. Residues Asn588 and Asn611 are each glycosylated (N-linked (GlcNAc...) asparagine). N-linked (GlcNAc...) asparagine glycans are attached at residues Asn716 and Asn751. N-linked (GlcNAc...) asparagine glycans are attached at residues Asn850, Asn890, Asn903, and Asn934. Positions 934–955 (NRSCDAKKTSDESENGGEEEDD) are disordered. Residues 945-955 (ESENGGEEEDD) show a composition bias toward acidic residues. Residues 962–982 (LAFYFSSASTYVTTLIGIFIL) form a helical membrane-spanning segment. Over 983–1009 (MCFDCPLRRAWLRIVDASIASVKSMLP) the chain is Cytoplasmic.

The protein belongs to the RLP family.

It localises to the cell membrane. This chain is Putative receptor-like protein 8, found in Arabidopsis thaliana (Mouse-ear cress).